The following is a 216-amino-acid chain: Adenylate kinase (216 aa).

10–15 (GAGKGT) contributes to the ATP binding site. The segment at 30 to 59 (STGDIFRKNISNKTPLGMEAKSYMDKGQLV) is NMP. Residues threonine 31, arginine 36, 57-59 (QLV), 85-88 (GFPR), and glutamine 92 contribute to the AMP site. The tract at residues 126 to 163 (GRRVCGECGASYHIKFITPKTEGVCDLCGGKLVQRKDD) is LID. Arginine 127 contacts ATP. Cysteine 130 and cysteine 133 together coordinate Zn(2+). 136–137 (SY) serves as a coordination point for ATP. Positions 150 and 153 each coordinate Zn(2+). The AMP site is built by arginine 160 and arginine 171. An ATP-binding site is contributed by lysine 199.

Belongs to the adenylate kinase family. In terms of assembly, monomer.

It localises to the cytoplasm. The catalysed reaction is AMP + ATP = 2 ADP. It participates in purine metabolism; AMP biosynthesis via salvage pathway; AMP from ADP: step 1/1. Functionally, catalyzes the reversible transfer of the terminal phosphate group between ATP and AMP. Plays an important role in cellular energy homeostasis and in adenine nucleotide metabolism. The protein is Adenylate kinase of Clostridium tetani (strain Massachusetts / E88).